We begin with the raw amino-acid sequence, 299 residues long: Tyrosine recombinase XerC (299 aa).

The region spanning Met-1–Leu-85 is the Core-binding (CB) domain. Positions Arg-106–Asp-285 constitute a Tyr recombinase domain. Residues Arg-146, Lys-170, His-237, Arg-240, and His-263 contribute to the active site. Tyr-272 functions as the O-(3'-phospho-DNA)-tyrosine intermediate in the catalytic mechanism.

The protein belongs to the 'phage' integrase family. XerC subfamily. As to quaternary structure, forms a cyclic heterotetrameric complex composed of two molecules of XerC and two molecules of XerD.

Its subcellular location is the cytoplasm. Site-specific tyrosine recombinase, which acts by catalyzing the cutting and rejoining of the recombining DNA molecules. The XerC-XerD complex is essential to convert dimers of the bacterial chromosome into monomers to permit their segregation at cell division. It also contributes to the segregational stability of plasmids. The sequence is that of Tyrosine recombinase XerC from Azotobacter vinelandii (strain DJ / ATCC BAA-1303).